An 844-amino-acid polypeptide reads, in one-letter code: Meiosis-specific protein PAIR3 (844 aa).

4 disordered regions span residues 41-389 (TSSV…RERR), 418-506 (KLSS…RFSD), 532-604 (DDLF…QISI), and 616-669 (WLSD…EPEK). The span at 106–120 (QPDDNAIEQTGTFSF) shows a compositional bias: polar residues. 2 stretches are compositionally biased toward basic and acidic residues: residues 122–134 (TRREQDSHLDQLD) and 145–164 (RQVESADKNKPNSEMLRMKL). 2 stretches are compositionally biased toward polar residues: residues 191-208 (QPKSQIANGPSSGRQKVF) and 218-229 (TPAQFNSQTANK). 2 stretches are compositionally biased toward basic and acidic residues: residues 256-270 (RKKEPTGSTHQDKSG) and 324-363 (AKVEPKKAHCSDRISHKTTQDDMERKVPSKYIPSEKKGEK). Composition is skewed to polar residues over residues 364–382 (TNSFSSLSRTGKTAESCSR) and 420–440 (SSPQLTSFKSKGKCSSISPQQ). Positions 441–456 (KENDNTHIPEASDRTA) are enriched in basic and acidic residues. Low complexity predominate over residues 459–473 (NSFNSTPSPAANPSP). Positions 545–554 (RSRSTSFTSD) are enriched in polar residues. Residues 616–640 (WLSDVDSPDKSSIEHLGRKSHLKEG) are compositionally biased toward basic and acidic residues. The span at 646–661 (QLTSPTHFATSGTQET) shows a compositional bias: polar residues. The stretch at 731–765 (VNAGKSKRKRLESTFEEQQEKLRILHEKFKEEVNQ) forms a coiled coil.

As to expression, expressed in pollen mother cells and the ovule tissues during meiosis.

The protein resides in the chromosome. It localises to the nucleus. Plays a crucial role in homologous chromosome pairing and synapsis in meiosis. Does not seem required for cytokinesis. Is essential for meiotic bouquet formation, homologous chromosome pairing and normal recombination, and synaptonemal complex (SC) assembly. Required for the proper association of PAIR2 with chromosomes. In Oryza sativa subsp. japonica (Rice), this protein is Meiosis-specific protein PAIR3.